Consider the following 309-residue polypeptide: Maintenance of mitochondrial morphology protein 1 (309 aa).

Topologically, residues 1–16 (MGNAYIFSLQPTFTQG) are lumenal. A helical transmembrane segment spans residues 17–37 (LILGQFSILFLLVLVLKYLFF). Over 38 to 309 (DTVSDHAYRT…EQQAGELPVN (272 aa)) the chain is Cytoplasmic. In terms of domain architecture, SMP-LTD spans 84–293 (ECESADWLNA…LPGLASVSEV (210 aa)).

It belongs to the MMM1 family. As to quaternary structure, homodimer. Component of the ER-mitochondria encounter structure (ERMES) or MDM complex, composed of MMM1, MDM10, MDM12 and MDM34. An MMM1 homodimer associates with one molecule of MDM12 on each side in a pairwise head-to-tail manner, and the SMP-LTD domains of MMM1 and MDM12 generate a continuous hydrophobic tunnel for phospholipid trafficking.

Its subcellular location is the endoplasmic reticulum membrane. In terms of biological role, component of the ERMES/MDM complex, which serves as a molecular tether to connect the endoplasmic reticulum (ER) and mitochondria. Components of this complex are involved in the control of mitochondrial shape and protein biogenesis, and function in nonvesicular lipid trafficking between the ER and mitochondria. The MDM12-MMM1 subcomplex functions in the major beta-barrel assembly pathway that is responsible for biogenesis of all outer membrane beta-barrel proteins, and acts in a late step after the SAM complex. The MDM10-MDM12-MMM1 subcomplex further acts in the TOM40-specific pathway after the action of the MDM12-MMM1 complex. Essential for establishing and maintaining the structure of mitochondria and maintenance of mtDNA nucleoids. The protein is Maintenance of mitochondrial morphology protein 1 of Postia placenta (strain ATCC 44394 / Madison 698-R) (Brown rot fungus).